A 320-amino-acid polypeptide reads, in one-letter code: Porphobilinogen deaminase (320 aa).

C248 is modified (S-(dipyrrolylmethanemethyl)cysteine).

The protein belongs to the HMBS family. Monomer. The cofactor is dipyrromethane.

It catalyses the reaction 4 porphobilinogen + H2O = hydroxymethylbilane + 4 NH4(+). Its pathway is porphyrin-containing compound metabolism; protoporphyrin-IX biosynthesis; coproporphyrinogen-III from 5-aminolevulinate: step 2/4. It participates in porphyrin-containing compound metabolism; chlorophyll biosynthesis. Its function is as follows. Tetrapolymerization of the monopyrrole PBG into the hydroxymethylbilane pre-uroporphyrinogen in several discrete steps. This Synechococcus elongatus (strain ATCC 33912 / PCC 7942 / FACHB-805) (Anacystis nidulans R2) protein is Porphobilinogen deaminase.